A 333-amino-acid chain; its full sequence is Succinylglutamate desuccinylase (333 aa).

Residues His-56, Glu-59, and His-149 each contribute to the Zn(2+) site. The active site involves Glu-214.

Belongs to the AspA/AstE family. Succinylglutamate desuccinylase subfamily. Zn(2+) is required as a cofactor.

The enzyme catalyses N-succinyl-L-glutamate + H2O = L-glutamate + succinate. Its pathway is amino-acid degradation; L-arginine degradation via AST pathway; L-glutamate and succinate from L-arginine: step 5/5. In terms of biological role, transforms N(2)-succinylglutamate into succinate and glutamate. The chain is Succinylglutamate desuccinylase from Chromobacterium violaceum (strain ATCC 12472 / DSM 30191 / JCM 1249 / CCUG 213 / NBRC 12614 / NCIMB 9131 / NCTC 9757 / MK).